The sequence spans 196 residues: HTH-type transcriptional regulator UidR (196 aa).

Residues 10-70 enclose the HTH tetR-type domain; the sequence is QPTRTRILNA…AIILQDQERA (61 aa). Residues 33-52 constitute a DNA-binding region (H-T-H motif); the sequence is SMKAICKSCAISPGTLYHHF.

Its function is as follows. Repressor for the uidRABC (gusRABC) operon. This is HTH-type transcriptional regulator UidR (uidR) from Escherichia coli O157:H7.